Here is a 709-residue protein sequence, read N- to C-terminus: Threonine--tRNA ligase, mitochondrial 1 (709 aa).

A mitochondrion-targeting transit peptide spans 1-21; it reads MLLRLTARSIRRFTTSSSSLP. In terms of domain architecture, TGS spans 73–135; that stretch reads DPIKVTLPDG…EGDCKLELFK (63 aa). Residues cysteine 407, histidine 458, and histidine 584 each contribute to the Zn(2+) site.

The protein belongs to the class-II aminoacyl-tRNA synthetase family.

The protein localises to the mitochondrion. It is found in the cytoplasm. The protein resides in the cytosol. It catalyses the reaction tRNA(Thr) + L-threonine + ATP = L-threonyl-tRNA(Thr) + AMP + diphosphate + H(+). The chain is Threonine--tRNA ligase, mitochondrial 1 from Arabidopsis thaliana (Mouse-ear cress).